Here is a 169-residue protein sequence, read N- to C-terminus: Peptide deformylase 1 (169 aa).

The Fe cation site is built by Cys-91 and His-133. Residue Glu-134 is part of the active site. His-137 contacts Fe cation.

It belongs to the polypeptide deformylase family. Fe(2+) is required as a cofactor.

It carries out the reaction N-terminal N-formyl-L-methionyl-[peptide] + H2O = N-terminal L-methionyl-[peptide] + formate. In terms of biological role, removes the formyl group from the N-terminal Met of newly synthesized proteins. Requires at least a dipeptide for an efficient rate of reaction. N-terminal L-methionine is a prerequisite for activity but the enzyme has broad specificity at other positions. The protein is Peptide deformylase 1 of Vibrio cholerae serotype O1 (strain ATCC 39315 / El Tor Inaba N16961).